The sequence spans 297 residues: ATP synthase subunit gamma, mitochondrial (297 aa).

Belongs to the ATPase gamma chain family. F-type ATPases have 2 components, CF(1) - the catalytic core - and CF(0) - the membrane proton channel. CF(1) has five subunits: alpha(3), beta(3), gamma(1), delta(1), epsilon(1). CF(0) has three main subunits: a, b and c.

Its subcellular location is the mitochondrion. It localises to the mitochondrion inner membrane. Its function is as follows. Mitochondrial membrane ATP synthase (F(1)F(0) ATP synthase or Complex V) produces ATP from ADP in the presence of a proton gradient across the membrane which is generated by electron transport complexes of the respiratory chain. F-type ATPases consist of two structural domains, F(1) - containing the extramembraneous catalytic core, and F(0) - containing the membrane proton channel, linked together by a central stalk and a peripheral stalk. During catalysis, ATP synthesis in the catalytic domain of F(1) is coupled via a rotary mechanism of the central stalk subunits to proton translocation. Part of the complex F(1) domain and the central stalk which is part of the complex rotary element. The gamma subunit protrudes into the catalytic domain formed of alpha(3)beta(3). Rotation of the central stalk against the surrounding alpha(3)beta(3) subunits leads to hydrolysis of ATP in three separate catalytic sites on the beta subunits. The polypeptide is ATP synthase subunit gamma, mitochondrial (Drosophila melanogaster (Fruit fly)).